Consider the following 1310-residue polypeptide: Rho family-interacting cell polarization regulator 2 (1310 aa).

Phosphoserine occurs at positions 123 and 178. The interval 196 to 254 (MHNLGHKNTNTPKEPQPKRVEEVYRALKNGLDEYLEFHQTELDKLTAQLKDMKRNSRLG) is involved in cell filopodia formation. A coiled-coil region spans residues 224–253 (NGLDEYLEFHQTELDKLTAQLKDMKRNSRL). Position 508 is a phosphoserine (serine 508). Residues 588-608 (SSLSSQNEGTEDSSSASSRNS) are compositionally biased toward polar residues. The tract at residues 588–639 (SSLSSQNEGTEDSSSASSRNSLGEDHEPKSHSKSDTVEPKKPSVDARSGTES) is disordered. A compositionally biased stretch (basic and acidic residues) spans 609–631 (LGEDHEPKSHSKSDTVEPKKPSV). Serine 682 bears the Phosphoserine mark.

It belongs to the RIPOR family. As to quaternary structure, homooligomer; homooligomerization is regulated by RHOC and leads to the formation of concatemers through the association of N- and C-termini. Interacts (phosphorylated form) with 14-3-3 proteins; these interactions occur during myogenic cell differentiation and also induces T cell proliferation arrest. Interacts (phosphorylated form) with HDAC6; this interaction occurs during early myogenic differentiation, prevents HDAC6 to deacetylate tubulin and also induces T cell proliferation arrest. Interacts with DYSF; this interaction occurs during early myogenic differentiation. Interacts with MYOF. Interacts (via active GTP- or inactive GDP-bound forms) with RHOA; this interaction is direct, blocks the loading of GTP to RHOA and decreases upon chemokine CCL19 stimulation in primary T lymphocytes. Interacts with RHOC. Interacts (via phosphorylated form) with YWHAB; this interaction occurs in a chemokine-dependent manner and does not compete for binding of RIPOR2 with RHOA nor blocks inhibition of RIPOR2-mediated RHOA activity. Interacts with YWHAE. Interacts with YWHAQ. In terms of processing, phosphorylated. Chemokine-induced phosphorylation in neutrophils occurs in a PKC- and AKT-dependent manner, resulting in RIPOR2 interaction with YWHAB and stabilization. Phosphorylated by PKCA, AKT1 and MAPKAPK1A; in vitro. As to expression, expressed in the cochlea (at protein level).

Its subcellular location is the cytoplasm. The protein resides in the cytoskeleton. It localises to the cell projection. It is found in the filopodium. The protein localises to the apical cell membrane. Its subcellular location is the stereocilium. The protein resides in the stereocilium membrane. Functionally, acts as an inhibitor of the small GTPase RHOA and plays several roles in the regulation of myoblast and hair cell differentiation, lymphocyte T proliferation and neutrophil polarization. Plays a role in fetal mononuclear myoblast differentiation by promoting filopodia and myotube formation. Maintains naive T lymphocytes in a quiescent state and prevents chemokine-induced T lymphocyte responses, such as cell adhesion, polarization and migration. Involved also in the regulation of neutrophil polarization, chemotaxis and adhesion. Required for normal development of inner and outer hair cell stereocilia within the cochlea of the inner ear. Plays a role for maintaining the structural organization of the basal domain of stereocilia. Involved in mechanosensory hair cell function. Required for normal hearing. The polypeptide is Rho family-interacting cell polarization regulator 2 (Rattus norvegicus (Rat)).